The chain runs to 255 residues: Pimeloyl-[acyl-carrier protein] methyl ester esterase (255 aa).

Residues Trp-18, 78-79 (SL), and 139-143 (FLALD) contribute to the substrate site. The Nucleophile role is filled by Ser-78. Catalysis depends on residues Asp-203 and His-233. His-233 is a substrate binding site.

It belongs to the AB hydrolase superfamily. Carboxylesterase BioH family. As to quaternary structure, monomer.

It localises to the cytoplasm. It catalyses the reaction 6-carboxyhexanoyl-[ACP] methyl ester + H2O = 6-carboxyhexanoyl-[ACP] + methanol + H(+). Its pathway is cofactor biosynthesis; biotin biosynthesis. In terms of biological role, the physiological role of BioH is to remove the methyl group introduced by BioC when the pimeloyl moiety is complete. It allows to synthesize pimeloyl-ACP via the fatty acid synthetic pathway through the hydrolysis of the ester bonds of pimeloyl-ACP esters. This Xylella fastidiosa (strain M23) protein is Pimeloyl-[acyl-carrier protein] methyl ester esterase.